The primary structure comprises 295 residues: Bifunctional protein FolD (295 aa).

NADP(+) is bound by residues 172–174, Ser-197, and Ile-238; that span reads GRS.

It belongs to the tetrahydrofolate dehydrogenase/cyclohydrolase family. As to quaternary structure, homodimer.

It carries out the reaction (6R)-5,10-methylene-5,6,7,8-tetrahydrofolate + NADP(+) = (6R)-5,10-methenyltetrahydrofolate + NADPH. It catalyses the reaction (6R)-5,10-methenyltetrahydrofolate + H2O = (6R)-10-formyltetrahydrofolate + H(+). It functions in the pathway one-carbon metabolism; tetrahydrofolate interconversion. In terms of biological role, catalyzes the oxidation of 5,10-methylenetetrahydrofolate to 5,10-methenyltetrahydrofolate and then the hydrolysis of 5,10-methenyltetrahydrofolate to 10-formyltetrahydrofolate. The polypeptide is Bifunctional protein FolD (Rickettsia akari (strain Hartford)).